An 843-amino-acid chain; its full sequence is Translation initiation factor IF-2 (843 aa).

2 disordered regions span residues 55 to 185 and 209 to 228; these read AEAV…EDRD and KVEE…QVKV. The span at 62-106 shows a compositional bias: basic and acidic residues; the sequence is PQEKPKKSAPKKEEKPKEEVKKEAEEKVAASKKEEEKPQEKKSVE. Basic residues predominate over residues 114–128; it reads LKKRRGLVIVKKKRP. Basic and acidic residues predominate over residues 129-141; sequence KVEPKVEEKEAKQ. Residues 156-165 show a composition bias toward basic residues; sequence LKRKPKKAKK. 2 stretches are compositionally biased toward basic and acidic residues: residues 171–185 and 209–221; these read KKNE…EDRD and KVEE…EPQK. The region spanning 342 to 511 is the tr-type G domain; it reads ERPPVITIMG…LLQAEIMELK (170 aa). The interval 351–358 is G1; the sequence is GHVDHGKT. 351–358 provides a ligand contact to GTP; the sequence is GHVDHGKT. The segment at 376 to 380 is G2; sequence GITQH. The segment at 397–400 is G3; sequence DTPG. GTP-binding positions include 397–401 and 451–454; these read DTPGH and NKID. The interval 451–454 is G4; sequence NKID. Residues 487-489 are G5; the sequence is SAK.

The protein belongs to the TRAFAC class translation factor GTPase superfamily. Classic translation factor GTPase family. IF-2 subfamily.

It is found in the cytoplasm. Its function is as follows. One of the essential components for the initiation of protein synthesis. Protects formylmethionyl-tRNA from spontaneous hydrolysis and promotes its binding to the 30S ribosomal subunits. Also involved in the hydrolysis of GTP during the formation of the 70S ribosomal complex. This Nitratiruptor sp. (strain SB155-2) protein is Translation initiation factor IF-2.